A 103-amino-acid chain; its full sequence is Small ribosomal subunit protein bS18c (103 aa).

This sequence belongs to the bacterial ribosomal protein bS18 family. In terms of assembly, part of the 30S ribosomal subunit.

The protein localises to the plastid. Its subcellular location is the chloroplast. The sequence is that of Small ribosomal subunit protein bS18c from Buxus microphylla (Littleleaf boxwood).